Here is a 97-residue protein sequence, read N- to C-terminus: Ig heavy chain V region 914 (97 aa).

The region spanning 1–97 (EVKLVESGGG…EDTAMYYCAR (97 aa)) is the Ig-like domain.

This Mus musculus (Mouse) protein is Ig heavy chain V region 914.